We begin with the raw amino-acid sequence, 162 residues long: Cytochrome c-type biogenesis protein CcmE (162 aa).

The Cytoplasmic portion of the chain corresponds to 1–8; that stretch reads MNPRRKKR. Residues 9–29 form a helical; Signal-anchor for type II membrane protein membrane-spanning segment; sequence LALVVGLIGGVAAVASLLLYA. Residues 30-162 lie on the Periplasmic side of the membrane; that stretch reads LNTNLNLFYT…YTETQKGGSR (133 aa). Heme is bound by residues His131 and Tyr135.

The protein belongs to the CcmE/CycJ family.

It is found in the cell inner membrane. Its function is as follows. Heme chaperone required for the biogenesis of c-type cytochromes. Transiently binds heme delivered by CcmC and transfers the heme to apo-cytochromes in a process facilitated by CcmF and CcmH. The protein is Cytochrome c-type biogenesis protein CcmE of Shewanella amazonensis (strain ATCC BAA-1098 / SB2B).